Consider the following 380-residue polypeptide: Phthiodiolone/phenolphthiodiolone dimycocerosates ketoreductase (380 aa).

This sequence belongs to the mer family. Phthiodiolone/phenolphthiodiolone dimycocerosates ketoreductase subfamily.

Functionally, catalyzes the reduction of the keto moiety of phthiodiolone dimycocerosates (DIM B) and glycosylated phenolphthiodiolone dimycocerosates to form the intermediate compounds phthiotriol and glycosylated phenolphthiotriol dimycocerosates during phthiocerol dimycocerosates (DIM A) and glycosylated phenolphthiocerol dimycocerosates (PGL) biosynthesis. The chain is Phthiodiolone/phenolphthiodiolone dimycocerosates ketoreductase from Mycobacterium sp. (strain JLS).